The primary structure comprises 78 residues: Xibalbin-13 1 (78 aa).

A signal peptide spans 1 to 27; sequence MKEANTRRYIHLCLVVVLVSTIITTEA. Residues 28–31 constitute a propeptide that is removed on maturation; sequence EDDR. Cystine bridges form between C34/C49, C41/C54, C48/C65, and C56/C63. Serine amide is present on S76.

Belongs to the xibalbin-13 family. In terms of tissue distribution, expressed by the venom gland.

Its subcellular location is the secreted. Probable neurotoxin. Strongly inhibits voltage-gated potassium channels (Kv1.1/KCNA1, Kv1.2/KCNA2, Kv1.3/KCNA3, and Kv1.6/KCNA6) and mildly inhibits sodium channels (Nav1.2/SCN2A, Nav1.4/SCN4A, Nav1.5/SCN5A, Nav1.6/SCN8A, and BgNav). Induces activation of protein kinase A type II (PKA-II) and MAP kinase Erk1/2 in primary nociceptive and non-nociceptive sensory neurons. Does not show cytotoxic activity. Does not have an impact on Ca2+, cAMP, and NO signaling in the cell types analyzed. Does not interfere with the adhesion of leukocytes to endothelial cells. This is Xibalbin-13 1 from Xibalbanus tulumensis (Blind cave remipede).